The following is a 425-amino-acid chain: Threonylcarbamoyladenosine tRNA methylthiotransferase (425 aa).

One can recognise a Radical SAM core domain in the interval 60-295 (RKNELIEVLS…RSYTRYTDER (236 aa)). 3 residues coordinate [4Fe-4S] cluster: Cys74, Cys78, and Cys81. The 63-residue stretch at 293–355 (DERIGELHRV…KFSMISKPAS (63 aa)) folds into the TRAM domain. A helical membrane pass occupies residues 362–382 (PLSLMHLFPLAVFCLVLITLY).

This sequence belongs to the methylthiotransferase family. CDKAL1 subfamily. Requires [4Fe-4S] cluster as cofactor.

It is found in the membrane. The enzyme catalyses N(6)-L-threonylcarbamoyladenosine(37) in tRNA + (sulfur carrier)-SH + AH2 + 2 S-adenosyl-L-methionine = 2-methylsulfanyl-N(6)-L-threonylcarbamoyladenosine(37) in tRNA + (sulfur carrier)-H + 5'-deoxyadenosine + L-methionine + A + S-adenosyl-L-homocysteine + 2 H(+). Its function is as follows. Catalyzes the methylthiolation of N6-threonylcarbamoyladenosine (t(6)A), leading to the formation of 2-methylthio-N6-threonylcarbamoyladenosine (ms(2)t(6)A) at position 37 in tRNAs that read codons beginning with adenine. This chain is Threonylcarbamoyladenosine tRNA methylthiotransferase, found in Caenorhabditis elegans.